The chain runs to 437 residues: tRNA-2-methylthio-N(6)-dimethylallyladenosine synthase (437 aa).

The MTTase N-terminal domain occupies 1–115; sequence MKVYIETMGC…ISQVIHKEKA (115 aa). [4Fe-4S] cluster-binding residues include cysteine 10, cysteine 46, cysteine 78, cysteine 148, cysteine 152, and cysteine 155. Residues 134-367 enclose the Radical SAM core domain; it reads KKAQIRSLLN…QNRHKEILEE (234 aa). The TRAM domain occupies 370–436; sequence KLEVGKTHVV…KGRLMATTKG (67 aa).

The protein belongs to the methylthiotransferase family. MiaB subfamily. As to quaternary structure, monomer. It depends on [4Fe-4S] cluster as a cofactor.

It localises to the cytoplasm. The enzyme catalyses N(6)-dimethylallyladenosine(37) in tRNA + (sulfur carrier)-SH + AH2 + 2 S-adenosyl-L-methionine = 2-methylsulfanyl-N(6)-dimethylallyladenosine(37) in tRNA + (sulfur carrier)-H + 5'-deoxyadenosine + L-methionine + A + S-adenosyl-L-homocysteine + 2 H(+). Catalyzes the methylthiolation of N6-(dimethylallyl)adenosine (i(6)A), leading to the formation of 2-methylthio-N6-(dimethylallyl)adenosine (ms(2)i(6)A) at position 37 in tRNAs that read codons beginning with uridine. This Helicobacter pylori (strain J99 / ATCC 700824) (Campylobacter pylori J99) protein is tRNA-2-methylthio-N(6)-dimethylallyladenosine synthase.